The following is a 1738-amino-acid chain: Gag-Pol polyprotein (1738 aa).

G2 is lipidated: N-myristoyl glycine; by host. Residues 110–124 are compositionally biased toward pro residues; sequence PPSAPSLPPEPPLST. The segment at 110-218 is disordered; it reads PPSAPSLPPE…STTSQAFPLR (109 aa). Residues 111–114 carry the PTAP/PSAP motif motif; it reads PSAP. Positions 130 to 134 match the LYPX(n)L motif motif; sequence LYPAL. A compositionally biased stretch (pro residues) spans 161–173; that stretch reads DPPPYRDPGPPSP. A PPXY motif motif is present at residues 162–165; the sequence is PPPY. A Phosphoserine; by host modification is found at S192. The segment at 345–393 is interaction with host PIAS4; sequence GRSPTNLAKVKGITQGPNESPSAFLERLKEAYRRYTPYDPEDPGQETNV. Residues 430–435 are interaction with host UBE2I; it reads IFNKRE. Composition is skewed to basic and acidic residues over residues 434–466 and 486–499; these read RETP…EKER and RQDR…RPQL. 2 disordered regions span residues 434–499 and 513–553; these read RETP…RPQL and WARD…PRIT. Positions 438-478 form a coiled coil; the sequence is EEREERIRRETEEKEERRRAEDVQREKERDRRRHREMSKLL. The CCHC-type zinc finger occupies 502–519; sequence DQCAYCKEKGHWARDCPK. The 71-residue stretch at 561–631 folds into the Peptidase A2 domain; the sequence is VTFLVDTGAQ…CPYPLLGRDL (71 aa). The Protease; shared with dimeric partner role is filled by D566. A Reverse transcriptase domain is found at 741–932; sequence LDQGILVPCQ…KQVKYLGYLL (192 aa). D809, D883, D884, D1183, E1221, D1242, and D1312 together coordinate Mg(2+). The 147-residue stretch at 1174–1320 folds into the RNase H type-1 domain; that stretch reads PDADHTWYTD…ADQAAREVAT (147 aa). The HHCC-type zinc finger occupies 1387-1427; sequence HQLTHLSFSKTKALLERNYCPYYMLNRDRTLKDITETCQAC. The Integrase catalytic domain occupies 1444-1602; the sequence is RGHRPGTHWE…TPYEILYGAP (159 aa). Residues D1455 and D1514 each contribute to the Mg(2+) site.

The protein belongs to the retroviral Pol polyprotein family. As to quaternary structure, homohexamer; further associates as homomultimer. The virus core is composed of a lattice formed from hexagonal rings, each containing six capsid monomers. In terms of assembly, interacts (via PPXY motif) with host NEDD4. Interacts (via PSAP motif) with host TSG101. Interacts (via LYPX(n)L motif) with host PDCD6IP. The reverse transcriptase is a monomer (Potential). Interacts (via RNase domains) with host release factor ETF1; this interaction is essential for translational readthrough of amber codon between viral gag and pol genes, as well as for viral replication. As to quaternary structure, homodimer. Mg(2+) serves as cofactor. Ubiquitinated by ITCH. Gag can recruit the ubiquitin ligase Itch in an L domain-independent manner to facilitate virus release via a mechanism that involves Gag ubiquitination. In terms of processing, specific enzymatic cleavages by the viral protease yield mature proteins. The protease is released by autocatalytic cleavage. The polyprotein is cleaved during and after budding, this process is termed maturation. Post-translationally, sumoylated; which is required for virus replication. Phosphorylated on serine residues.

The protein localises to the virion. It localises to the host cell membrane. Its subcellular location is the host late endosome membrane. The protein resides in the host endosome. It is found in the host multivesicular body. The protein localises to the host cytoplasm. The enzyme catalyses DNA(n) + a 2'-deoxyribonucleoside 5'-triphosphate = DNA(n+1) + diphosphate. It catalyses the reaction Endonucleolytic cleavage to 5'-phosphomonoester.. With respect to regulation, most efficiently inhibited by Amprenavir, which is able to block Gag-Pol processing in infected cells. Functionally, plays a role in budding and is processed by the viral protease during virion maturation outside the cell. During budding, it recruits, in a PPXY-dependent or independent manner, Nedd4-like ubiquitin ligases that conjugate ubiquitin molecules to Gag-Pol, or to Gag-Pol binding host factors. Interaction with HECT ubiquitin ligases probably links the viral protein to the host ESCRT pathway and facilitates release. Targets Gag and gag-pol polyproteins to the plasma membrane via a multipartite membrane binding signal, that includes its myristoylated N-terminus. Also mediates nuclear localization of the pre-integration complex. In terms of biological role, constituent of the pre-integration complex (PIC) which tethers the latter to mitotic chromosomes. This allows the integration of the viral genome into the host DNA. Its function is as follows. Forms the spherical core of the virion that encapsulates the genomic RNA-nucleocapsid complex. Functionally, involved in the packaging and encapsidation of two copies of the genome. Binds with high affinity to conserved UCUG elements within the packaging signal, located near the 5'-end of the genome. This binding is dependent on genome dimerization. Acts as a nucleic acid chaperone which is involved in rearrangement of nucleic acid secondary structures during gRNA retrotranscription. The aspartyl protease mediates proteolytic cleavages of Gag and Gag-Pol polyproteins during or shortly after the release of the virion from the plasma membrane. Cleavages take place as an ordered, step-wise cascade to yield mature proteins. This process is called maturation. Displays maximal activity during the budding process just prior to particle release from the cell (Potential). Cleaves the translation initiation factor eIF4G leading to the inhibition of host cap-dependent translation. In terms of biological role, RT is a multifunctional enzyme that converts the viral dimeric RNA genome into dsDNA in the cytoplasm, shortly after virus entry into the cell. This enzyme displays a DNA polymerase activity that can copy either DNA or RNA templates, and a ribonuclease H (RNase H) activity that cleaves the RNA strand of RNA-DNA heteroduplexes in a partially processive 3' to 5' endonucleasic mode. Conversion of viral genomic RNA into dsDNA requires many steps. A tRNA binds to the primer-binding site (PBS) situated at the 5' end of the viral RNA. RT uses the 3' end of the tRNA primer to perform a short round of RNA-dependent minus-strand DNA synthesis. The reading proceeds through the U5 region and ends after the repeated (R) region which is present at both ends of viral RNA. The portion of the RNA-DNA heteroduplex is digested by the RNase H, resulting in a ssDNA product attached to the tRNA primer. This ssDNA/tRNA hybridizes with the identical R region situated at the 3' end of viral RNA. This template exchange, known as minus-strand DNA strong stop transfer, can be either intra- or intermolecular. RT uses the 3' end of this newly synthesized short ssDNA to perform the RNA-dependent minus-strand DNA synthesis of the whole template. RNase H digests the RNA template except for a polypurine tract (PPT) situated at the 5' end of the genome. It is not clear if both polymerase and RNase H activities are simultaneous. RNase H probably can proceed both in a polymerase-dependent (RNA cut into small fragments by the same RT performing DNA synthesis) and a polymerase-independent mode (cleavage of remaining RNA fragments by free RTs). Secondly, RT performs DNA-directed plus-strand DNA synthesis using the PPT that has not been removed by RNase H as primers. PPT and tRNA primers are then removed by RNase H. The 3' and 5' ssDNA PBS regions hybridize to form a circular dsDNA intermediate. Strand displacement synthesis by RT to the PBS and PPT ends produces a blunt ended, linear dsDNA copy of the viral genome that includes long terminal repeats (LTRs) at both ends. Its function is as follows. Catalyzes viral DNA integration into the host chromosome, by performing a series of DNA cutting and joining reactions. This enzyme activity takes place after virion entry into a cell and reverse transcription of the RNA genome in dsDNA. The first step in the integration process is 3' processing. This step requires a complex comprising the viral genome, matrix protein and integrase. This complex is called the pre-integration complex (PIC). The integrase protein removes 2 nucleotides from each 3' end of the viral DNA, leaving recessed CA OH's at the 3' ends. In the second step that requires cell division, the PIC enters cell nucleus. In the third step, termed strand transfer, the integrase protein joins the previously processed 3' ends to the 5' ends of strands of target cellular DNA at the site of integration. The last step is viral DNA integration into host chromosome. This Mus musculus (Mouse) protein is Gag-Pol polyprotein (pol).